Here is a 485-residue protein sequence, read N- to C-terminus: Protein nucleotidyltransferase YdiU (485 aa).

ATP is bound by residues Gly100, Gly102, Arg103, Lys123, Asp135, Gly136, Arg189, and Arg196. Asp265 (proton acceptor) is an active-site residue. 2 residues coordinate Mg(2+): Asn266 and Asp275. Asp275 provides a ligand contact to ATP.

This sequence belongs to the SELO family. Mg(2+) is required as a cofactor. It depends on Mn(2+) as a cofactor.

The catalysed reaction is L-seryl-[protein] + ATP = 3-O-(5'-adenylyl)-L-seryl-[protein] + diphosphate. It catalyses the reaction L-threonyl-[protein] + ATP = 3-O-(5'-adenylyl)-L-threonyl-[protein] + diphosphate. The enzyme catalyses L-tyrosyl-[protein] + ATP = O-(5'-adenylyl)-L-tyrosyl-[protein] + diphosphate. It carries out the reaction L-histidyl-[protein] + UTP = N(tele)-(5'-uridylyl)-L-histidyl-[protein] + diphosphate. The catalysed reaction is L-seryl-[protein] + UTP = O-(5'-uridylyl)-L-seryl-[protein] + diphosphate. It catalyses the reaction L-tyrosyl-[protein] + UTP = O-(5'-uridylyl)-L-tyrosyl-[protein] + diphosphate. In terms of biological role, nucleotidyltransferase involved in the post-translational modification of proteins. It can catalyze the addition of adenosine monophosphate (AMP) or uridine monophosphate (UMP) to a protein, resulting in modifications known as AMPylation and UMPylation. In Trichormus variabilis (strain ATCC 29413 / PCC 7937) (Anabaena variabilis), this protein is Protein nucleotidyltransferase YdiU.